A 227-amino-acid chain; its full sequence is Peroxisomal membrane protein 11B (227 aa).

The Cytoplasmic segment spans residues 1–85 (MSLDTVDKLV…RNPGATPMIR (85 aa)). A helical transmembrane segment spans residues 86–106 (FLAVLANSGEMVYFFFDHFLW). Residues 107 to 201 (LSRIGSIDAK…IALAEIHPNP (95 aa)) lie on the Lumenal side of the membrane. A helical transmembrane segment spans residues 202–222 (FCNHTITLGISGLVSAWAGWY). Residues 223 to 227 (RNWPS) are Cytoplasmic-facing.

The protein belongs to the peroxin-11 family. As to quaternary structure, homooligomer. Interacts with ARC5 and FIS1B on peroxisomes. In terms of tissue distribution, expressed in roots, leaves and developing siliques.

Its subcellular location is the peroxisome membrane. In terms of biological role, involved in peroxisomal proliferation. Promotes peroxisomal duplication, aggregation or elongation without fission. This is Peroxisomal membrane protein 11B (PEX11B) from Arabidopsis thaliana (Mouse-ear cress).